The sequence spans 119 residues: Large ribosomal subunit protein bL20 (119 aa).

This sequence belongs to the bacterial ribosomal protein bL20 family.

Its function is as follows. Binds directly to 23S ribosomal RNA and is necessary for the in vitro assembly process of the 50S ribosomal subunit. It is not involved in the protein synthesizing functions of that subunit. The sequence is that of Large ribosomal subunit protein bL20 from Stenotrophomonas maltophilia (strain K279a).